The primary structure comprises 176 residues: ATP synthase subunit delta (176 aa).

The protein belongs to the ATPase delta chain family. In terms of assembly, F-type ATPases have 2 components, F(1) - the catalytic core - and F(0) - the membrane proton channel. F(1) has five subunits: alpha(3), beta(3), gamma(1), delta(1), epsilon(1). F(0) has three main subunits: a(1), b(2) and c(10-14). The alpha and beta chains form an alternating ring which encloses part of the gamma chain. F(1) is attached to F(0) by a central stalk formed by the gamma and epsilon chains, while a peripheral stalk is formed by the delta and b chains.

It is found in the cell inner membrane. F(1)F(0) ATP synthase produces ATP from ADP in the presence of a proton or sodium gradient. F-type ATPases consist of two structural domains, F(1) containing the extramembraneous catalytic core and F(0) containing the membrane proton channel, linked together by a central stalk and a peripheral stalk. During catalysis, ATP synthesis in the catalytic domain of F(1) is coupled via a rotary mechanism of the central stalk subunits to proton translocation. Functionally, this protein is part of the stalk that links CF(0) to CF(1). It either transmits conformational changes from CF(0) to CF(1) or is implicated in proton conduction. This Campylobacter fetus subsp. fetus (strain 82-40) protein is ATP synthase subunit delta.